Reading from the N-terminus, the 571-residue chain is Glutamate--tRNA ligase (571 aa).

The short motif at 110 to 120 (PNPNGPATLGS) is the 'HIGH' region element.

The protein belongs to the class-I aminoacyl-tRNA synthetase family. Glutamate--tRNA ligase type 2 subfamily.

It is found in the cytoplasm. The catalysed reaction is tRNA(Glu) + L-glutamate + ATP = L-glutamyl-tRNA(Glu) + AMP + diphosphate. Its function is as follows. Catalyzes the attachment of glutamate to tRNA(Glu) in a two-step reaction: glutamate is first activated by ATP to form Glu-AMP and then transferred to the acceptor end of tRNA(Glu). The chain is Glutamate--tRNA ligase from Methanosarcina barkeri (strain Fusaro / DSM 804).